The sequence spans 124 residues: Large ribosomal subunit protein eL22y (124 aa).

The protein belongs to the eukaryotic ribosomal protein eL22 family.

The chain is Large ribosomal subunit protein eL22y (RPL22C) from Arabidopsis thaliana (Mouse-ear cress).